Consider the following 200-residue polypeptide: MIAFVRGQVAAVTLSSAVLEVGGVGLDIMCTPGTLATLRVGQQAALPTSMVVREDSLTLFGFADEDEKQTFELLQTASGVGPKLAQAMLAVLSTDDLRLAITGDDVKTLTRVPGIGQKGAQRIILELRDRIGAPTGAGRSAGVPAPAGAVWRDQVHQGLVGLGWPVRDAEKAVAAVAPEAGDVPDVAALLRAALRTLSKA.

The domain I stretch occupies residues 1 to 63 (MIAFVRGQVA…EDSLTLFGFA (63 aa)). Positions 64-142 (DEDEKQTFEL…APTGAGRSAG (79 aa)) are domain II. A flexible linker region spans residues 142 to 146 (GVPAP). Positions 147 to 200 (AGAVWRDQVHQGLVGLGWPVRDAEKAVAAVAPEAGDVPDVAALLRAALRTLSKA) are domain III.

The protein belongs to the RuvA family. As to quaternary structure, homotetramer. Forms an RuvA(8)-RuvB(12)-Holliday junction (HJ) complex. HJ DNA is sandwiched between 2 RuvA tetramers; dsDNA enters through RuvA and exits via RuvB. An RuvB hexamer assembles on each DNA strand where it exits the tetramer. Each RuvB hexamer is contacted by two RuvA subunits (via domain III) on 2 adjacent RuvB subunits; this complex drives branch migration. In the full resolvosome a probable DNA-RuvA(4)-RuvB(12)-RuvC(2) complex forms which resolves the HJ.

It localises to the cytoplasm. The RuvA-RuvB-RuvC complex processes Holliday junction (HJ) DNA during genetic recombination and DNA repair, while the RuvA-RuvB complex plays an important role in the rescue of blocked DNA replication forks via replication fork reversal (RFR). RuvA specifically binds to HJ cruciform DNA, conferring on it an open structure. The RuvB hexamer acts as an ATP-dependent pump, pulling dsDNA into and through the RuvAB complex. HJ branch migration allows RuvC to scan DNA until it finds its consensus sequence, where it cleaves and resolves the cruciform DNA. The chain is Holliday junction branch migration complex subunit RuvA from Nocardioides sp. (strain ATCC BAA-499 / JS614).